A 445-amino-acid polypeptide reads, in one-letter code: Trigger factor (445 aa).

Positions 164 to 249 (GDQVTFDFEG…VKKVEEAKLP (86 aa)) constitute a PPIase FKBP-type domain.

This sequence belongs to the FKBP-type PPIase family. Tig subfamily.

The protein resides in the cytoplasm. It carries out the reaction [protein]-peptidylproline (omega=180) = [protein]-peptidylproline (omega=0). In terms of biological role, involved in protein export. Acts as a chaperone by maintaining the newly synthesized protein in an open conformation. Functions as a peptidyl-prolyl cis-trans isomerase. This chain is Trigger factor, found in Psychrobacter sp. (strain PRwf-1).